A 250-amino-acid chain; its full sequence is Virulence plasmid protein pGP6-D-related protein (250 aa).

The protein belongs to the UPF0137 (pGP6-D) family.

This is Virulence plasmid protein pGP6-D-related protein from Chlamydia pneumoniae (Chlamydophila pneumoniae).